Consider the following 189-residue polypeptide: Flavin prenyltransferase UbiX (189 aa).

FMN-binding positions include 10 to 12 (GAS), serine 36, 91 to 94 (STNT), and arginine 126. Residues tyrosine 156 and lysine 172 each coordinate dimethylallyl phosphate.

It belongs to the UbiX/PAD1 family.

It catalyses the reaction dimethylallyl phosphate + FMNH2 = prenylated FMNH2 + phosphate. Flavin prenyltransferase that catalyzes the synthesis of the prenylated FMN cofactor (prenyl-FMN) for 4-hydroxy-3-polyprenylbenzoic acid decarboxylase UbiD. The prenyltransferase is metal-independent and links a dimethylallyl moiety from dimethylallyl monophosphate (DMAP) to the flavin N5 and C6 atoms of FMN. The sequence is that of Flavin prenyltransferase UbiX from Aquifex aeolicus (strain VF5).